We begin with the raw amino-acid sequence, 557 residues long: Arginine--tRNA ligase (557 aa).

A 'HIGH' region motif is present at residues 132–142 (ANPTGDLHLGH).

Belongs to the class-I aminoacyl-tRNA synthetase family. In terms of assembly, monomer.

The protein localises to the cytoplasm. It catalyses the reaction tRNA(Arg) + L-arginine + ATP = L-arginyl-tRNA(Arg) + AMP + diphosphate. This Geobacillus kaustophilus (strain HTA426) protein is Arginine--tRNA ligase.